We begin with the raw amino-acid sequence, 441 residues long: Adenylyltransferase and sulfurtransferase MOCS3 (441 aa).

Residues glycine 83, aspartate 104, threonine 111–arginine 115, lysine 128, and aspartate 172–asparagine 173 contribute to the ATP site. Residues cysteine 213 and cysteine 216 each coordinate Zn(2+). Catalysis depends on cysteine 230, which acts as the Glycyl thioester intermediate; for adenylyltransferase activity. Residues cysteine 288 and cysteine 291 each coordinate Zn(2+). One can recognise a Rhodanese domain in the interval alanine 339–proline 439. Residue cysteine 395 is the Cysteine persulfide intermediate; for sulfurtransferase activity of the active site.

This sequence in the N-terminal section; belongs to the HesA/MoeB/ThiF family. UBA4 subfamily. It depends on Zn(2+) as a cofactor.

Its subcellular location is the cytoplasm. The catalysed reaction is [molybdopterin-synthase sulfur-carrier protein]-C-terminal Gly-Gly + ATP + H(+) = [molybdopterin-synthase sulfur-carrier protein]-C-terminal Gly-Gly-AMP + diphosphate. It carries out the reaction [molybdopterin-synthase sulfur-carrier protein]-C-terminal Gly-Gly-AMP + S-sulfanyl-L-cysteinyl-[cysteine desulfurase] + AH2 = [molybdopterin-synthase sulfur-carrier protein]-C-terminal-Gly-aminoethanethioate + L-cysteinyl-[cysteine desulfurase] + A + AMP + 2 H(+). Its pathway is tRNA modification; 5-methoxycarbonylmethyl-2-thiouridine-tRNA biosynthesis. It functions in the pathway cofactor biosynthesis; molybdopterin biosynthesis. Its function is as follows. Plays a central role in 2-thiolation of mcm(5)S(2)U at tRNA wobble positions of cytosolic tRNA(Lys), tRNA(Glu) and tRNA(Gln). Also essential during biosynthesis of the molybdenum cofactor. Acts by mediating the C-terminal thiocarboxylation of sulfur carriers URM1 and MOCS2A. Its N-terminus first activates URM1 and MOCS2A as acyl-adenylates (-COAMP), then the persulfide sulfur on the catalytic cysteine is transferred to URM1 and MOCS2A to form thiocarboxylation (-COSH) of their C-terminus. The reaction probably involves hydrogen sulfide that is generated from the persulfide intermediate and that acts as a nucleophile towards URM1 and MOCS2A. Subsequently, a transient disulfide bond is formed. Does not use thiosulfate as sulfur donor; NFS1 probably acting as a sulfur donor for thiocarboxylation reactions. The polypeptide is Adenylyltransferase and sulfurtransferase MOCS3 (Anopheles gambiae (African malaria mosquito)).